A 150-amino-acid polypeptide reads, in one-letter code: Ribonuclease H (150 aa).

The 142-residue stretch at 1–142 (MSDSVEIFTD…ADQLANRGVD (142 aa)) folds into the RNase H type-1 domain. Residues aspartate 10, glutamate 48, aspartate 70, and aspartate 134 each coordinate Mg(2+).

This sequence belongs to the RNase H family. As to quaternary structure, monomer. Requires Mg(2+) as cofactor.

It localises to the cytoplasm. It catalyses the reaction Endonucleolytic cleavage to 5'-phosphomonoester.. Endonuclease that specifically degrades the RNA of RNA-DNA hybrids. The polypeptide is Ribonuclease H (Pseudomonas fluorescens (strain ATCC BAA-477 / NRRL B-23932 / Pf-5)).